Reading from the N-terminus, the 484-residue chain is Glutamate--tRNA ligase (484 aa).

The 'HIGH' region signature appears at 11 to 21 (PSPTGYLHIGN). The 'KMSKS' region motif lies at 252–256 (KLSKR). K255 serves as a coordination point for ATP.

This sequence belongs to the class-I aminoacyl-tRNA synthetase family. Glutamate--tRNA ligase type 1 subfamily. In terms of assembly, monomer.

It is found in the cytoplasm. It carries out the reaction tRNA(Glu) + L-glutamate + ATP = L-glutamyl-tRNA(Glu) + AMP + diphosphate. Functionally, catalyzes the attachment of glutamate to tRNA(Glu) in a two-step reaction: glutamate is first activated by ATP to form Glu-AMP and then transferred to the acceptor end of tRNA(Glu). This is Glutamate--tRNA ligase from Staphylococcus aureus (strain bovine RF122 / ET3-1).